Reading from the N-terminus, the 241-residue chain is Ribonuclease P protein component 3 (241 aa).

The protein belongs to the eukaryotic/archaeal RNase P protein component 3 family. Consists of a catalytic RNA component and at least 4-5 protein subunits.

Its subcellular location is the cytoplasm. It catalyses the reaction Endonucleolytic cleavage of RNA, removing 5'-extranucleotides from tRNA precursor.. Functionally, part of ribonuclease P, a protein complex that generates mature tRNA molecules by cleaving their 5'-ends. In Methanococcoides burtonii (strain DSM 6242 / NBRC 107633 / OCM 468 / ACE-M), this protein is Ribonuclease P protein component 3.